Consider the following 245-residue polypeptide: Protein FAM133B (245 aa).

2 disordered regions span residues 19–38 (SRGPIQSSGPTIQDYLNRPR) and 69–245 (WKKE…SDSP). The span at 69–80 (WKKELEKHREKL) shows a compositional bias: basic and acidic residues. Serine 82 is subject to Phosphoserine. Basic residues predominate over residues 89 to 102 (KKRQKKKKEKKKSG). Low complexity predominate over residues 103–119 (RYSSSSSSSSDSSSSSS). Residues 128-140 (QTKRRKKKKSHCH) show a composition bias toward basic residues. Positions 165–176 (KDITEREKDTKG) are enriched in basic and acidic residues. 4 positions are modified to phosphoserine: serine 190, serine 191, serine 193, and serine 195. Over residues 209 to 219 (SGEERERTTDK) the composition is skewed to basic and acidic residues. Positions 220 to 237 (AKKRRKHKKHSKKKKKKA) are enriched in basic residues.

It belongs to the FAM133 family.

This chain is Protein FAM133B (Fam133b), found in Rattus norvegicus (Rat).